Reading from the N-terminus, the 540-residue chain is Chaperonin GroEL 4 (540 aa).

ATP-binding positions include 29–32 (TLGP), 86–90 (DGTTT), Gly413, 477–479 (NAA), and Asp493.

This sequence belongs to the chaperonin (HSP60) family. In terms of assembly, forms a cylinder of 14 subunits composed of two heptameric rings stacked back-to-back. Interacts with the co-chaperonin GroES.

Its subcellular location is the cytoplasm. The enzyme catalyses ATP + H2O + a folded polypeptide = ADP + phosphate + an unfolded polypeptide.. Functionally, together with its co-chaperonin GroES, plays an essential role in assisting protein folding. The GroEL-GroES system forms a nano-cage that allows encapsulation of the non-native substrate proteins and provides a physical environment optimized to promote and accelerate protein folding. This chain is Chaperonin GroEL 4, found in Frankia alni (strain DSM 45986 / CECT 9034 / ACN14a).